A 62-amino-acid polypeptide reads, in one-letter code: Phospholipase A2 superbin a (62 aa).

Ca(2+) contacts are provided by Tyr-28, Gly-30, and Gly-32. A disulfide bond links Cys-29 and Cys-45. Residue His-48 is part of the active site. Asp-49 is a binding site for Ca(2+).

Requires Ca(2+) as cofactor. In terms of tissue distribution, expressed by the venom gland.

The protein resides in the secreted. It carries out the reaction a 1,2-diacyl-sn-glycero-3-phosphocholine + H2O = a 1-acyl-sn-glycero-3-phosphocholine + a fatty acid + H(+). In terms of biological role, snake venom phospholipase A2 (PLA2) that inhibits collagen-induced platelet aggregation. In terms of inhibition of platelet aggregation, superbin a is more potent as superbin b, c, and d. PLA2 catalyzes the calcium-dependent hydrolysis of the 2-acyl groups in 3-sn-phosphoglycerides. In Austrelaps superbus (Lowland copperhead snake), this protein is Phospholipase A2 superbin a.